The sequence spans 436 residues: Protein translocase subunit SecY (436 aa).

10 consecutive transmembrane segments (helical) span residues 18–38 (IAFT…PATG), 69–89 (LLQV…SIIV), 116–138 (YTRY…LART), 154–174 (ILTV…VMWF), 187–207 (MSLL…GQVV), 214–234 (VFAI…FVEE), 266–286 (MANV…GILI), 314–334 (PVYM…YVSI), 375–395 (VVGA…FAVI), and 396–416 (GTSQ…GVGL).

This sequence belongs to the SecY/SEC61-alpha family. Component of the Sec protein translocase complex. Heterotrimer consisting of SecY, SecE and SecG subunits. The heterotrimers can form oligomers, although 1 heterotrimer is thought to be able to translocate proteins. Interacts with the ribosome. Interacts with SecDF, and other proteins may be involved. Interacts with SecA.

Its subcellular location is the cell membrane. The central subunit of the protein translocation channel SecYEG. Consists of two halves formed by TMs 1-5 and 6-10. These two domains form a lateral gate at the front which open onto the bilayer between TMs 2 and 7, and are clamped together by SecE at the back. The channel is closed by both a pore ring composed of hydrophobic SecY resides and a short helix (helix 2A) on the extracellular side of the membrane which forms a plug. The plug probably moves laterally to allow the channel to open. The ring and the pore may move independently. The protein is Protein translocase subunit SecY of Micrococcus luteus (Micrococcus lysodeikticus).